The sequence spans 279 residues: GTP cyclohydrolase MptA (279 aa).

It belongs to the GTP cyclohydrolase IV family. In terms of assembly, homodimer. It depends on Fe(2+) as a cofactor.

It catalyses the reaction GTP + H2O = 7,8-dihydroneopterin 2',3'-cyclic phosphate + formate + diphosphate + H(+). The protein operates within cofactor biosynthesis; 5,6,7,8-tetrahydromethanopterin biosynthesis. In terms of biological role, converts GTP to 7,8-dihydro-D-neopterin 2',3'-cyclic phosphate, the first intermediate in the biosynthesis of coenzyme methanopterin. The polypeptide is GTP cyclohydrolase MptA (Korarchaeum cryptofilum (strain OPF8)).